The following is a 637-amino-acid chain: 1-deoxy-D-xylulose-5-phosphate synthase (637 aa).

Residues H74 and 115–117 each bind thiamine diphosphate; that span reads GHS. Residue D146 coordinates Mg(2+). Residues 147–148, N175, Y285, and E366 each bind thiamine diphosphate; that span reads GA. Residue N175 participates in Mg(2+) binding.

Belongs to the transketolase family. DXPS subfamily. Homodimer. Requires Mg(2+) as cofactor. Thiamine diphosphate serves as cofactor.

The enzyme catalyses D-glyceraldehyde 3-phosphate + pyruvate + H(+) = 1-deoxy-D-xylulose 5-phosphate + CO2. The protein operates within metabolic intermediate biosynthesis; 1-deoxy-D-xylulose 5-phosphate biosynthesis; 1-deoxy-D-xylulose 5-phosphate from D-glyceraldehyde 3-phosphate and pyruvate: step 1/1. Catalyzes the acyloin condensation reaction between C atoms 2 and 3 of pyruvate and glyceraldehyde 3-phosphate to yield 1-deoxy-D-xylulose-5-phosphate (DXP). The polypeptide is 1-deoxy-D-xylulose-5-phosphate synthase (Pelotomaculum thermopropionicum (strain DSM 13744 / JCM 10971 / SI)).